Here is a 514-residue protein sequence, read N- to C-terminus: Na(+)/H(+) antiporter NhaB (514 aa).

The next 12 helical transmembrane spans lie at 23 to 43 (LALL…PFIA), 63 to 83 (PLLP…TSAA), 97 to 117 (LLLM…LFIF), 120 to 140 (LLLS…AAAF), 144 to 164 (FLDA…FYGI), 202 to 222 (LMMH…VGEP), 238 to 258 (FFLR…LTCM), 303 to 323 (AIIG…VGLI), 357 to 377 (LTVF…APII), 391 to 411 (LFYL…VGTI), 447 to 467 (ATPN…APLI), and 475 to 495 (VWMA…CVEF).

It belongs to the NhaB Na(+)/H(+) (TC 2.A.34) antiporter family.

Its subcellular location is the cell inner membrane. It catalyses the reaction 2 Na(+)(in) + 3 H(+)(out) = 2 Na(+)(out) + 3 H(+)(in). Na(+)/H(+) antiporter that extrudes sodium in exchange for external protons. The chain is Na(+)/H(+) antiporter NhaB from Salmonella heidelberg (strain SL476).